The following is a 208-amino-acid chain: Small ribosomal subunit protein uS4 (208 aa).

Positions 98–159 (LRLDNVAYRL…AARTHIRIAA (62 aa)) constitute an S4 RNA-binding domain.

This sequence belongs to the universal ribosomal protein uS4 family. As to quaternary structure, part of the 30S ribosomal subunit. Contacts protein S5. The interaction surface between S4 and S5 is involved in control of translational fidelity.

Its function is as follows. One of the primary rRNA binding proteins, it binds directly to 16S rRNA where it nucleates assembly of the body of the 30S subunit. In terms of biological role, with S5 and S12 plays an important role in translational accuracy. This is Small ribosomal subunit protein uS4 from Acidithiobacillus ferrooxidans (strain ATCC 23270 / DSM 14882 / CIP 104768 / NCIMB 8455) (Ferrobacillus ferrooxidans (strain ATCC 23270)).